Reading from the N-terminus, the 132-residue chain is Small ribosomal subunit protein uS8 (132 aa).

This sequence belongs to the universal ribosomal protein uS8 family. In terms of assembly, part of the 30S ribosomal subunit. Contacts proteins S5 and S12.

Functionally, one of the primary rRNA binding proteins, it binds directly to 16S rRNA central domain where it helps coordinate assembly of the platform of the 30S subunit. The chain is Small ribosomal subunit protein uS8 from Staphylococcus haemolyticus (strain JCSC1435).